The chain runs to 1077 residues: Endo-1,4-beta-xylanase Y (1077 aa).

Positions methionine 1–asparagine 26 are cleaved as a signal peptide. Positions aspartate 33–lysine 180 constitute a CBM-cenC 1 domain. In terms of domain architecture, GH10 spans tyrosine 189–isoleucine 538. Glutamate 337 acts as the Proton donor in catalysis. Glutamate 460 serves as the catalytic Nucleophile. Residues glutamate 543–aspartate 563 form a disordered region. The 150-residue stretch at asparagine 565–alanine 714 folds into the CBM-cenC 2 domain. In terms of domain architecture, Dockerin spans proline 728–valine 796.

This sequence belongs to the glycosyl hydrolase 10 (cellulase F) family.

The enzyme catalyses Endohydrolysis of (1-&gt;4)-beta-D-xylosidic linkages in xylans.. The polypeptide is Endo-1,4-beta-xylanase Y (xynY) (Acetivibrio thermocellus (Hungateiclostridium thermocellum)).